Reading from the N-terminus, the 262-residue chain is Demethyldecarbamoylnovobiocin O-methyltransferase (262 aa).

Residue 64–65 (TM) coordinates S-adenosyl-L-methionine. Residue Glu-72 is the Proton acceptor of the active site. Residues 92–96 (ETGVW), 122–126 (DSFQG), Phe-178, 196–197 (DG), and Ser-202 contribute to the S-adenosyl-L-methionine site. Asp-196 contributes to the Mg(2+) binding site. 2 residues coordinate Mg(2+): Asp-223 and Asp-224.

The protein belongs to the methyltransferase TylF/MycF family. In terms of assembly, homodimer. The cofactor is Mg(2+).

It carries out the reaction desmethyldescarbamoylnovobiocin + S-adenosyl-L-methionine = descarbamoylnovobiocin + S-adenosyl-L-homocysteine + H(+). It participates in antibiotic biosynthesis; novobiocin biosynthesis. S-adenosyl-L-methionine-dependent O-methyltransferase that methylates at 4-OH of the noviose moiety, the penultimate step in the novobiocin biosynthesis pathway. Novobiocin is an aminocoumarin family antibiotic that targets bacterial DNA gyrases. The chain is Demethyldecarbamoylnovobiocin O-methyltransferase (novP) from Streptomyces niveus (Streptomyces spheroides).